The sequence spans 170 residues: NADH-quinone oxidoreductase subunit E (170 aa).

Positions 93, 98, 134, and 138 each coordinate [2Fe-2S] cluster.

Belongs to the complex I 24 kDa subunit family. Requires [2Fe-2S] cluster as cofactor.

It catalyses the reaction a quinone + NADH + 5 H(+)(in) = a quinol + NAD(+) + 4 H(+)(out). Functionally, NDH-1 shuttles electrons from NADH, via FMN and iron-sulfur (Fe-S) centers, to quinones in the respiratory chain. Couples the redox reaction to proton translocation (for every two electrons transferred, four hydrogen ions are translocated across the cytoplasmic membrane), and thus conserves the redox energy in a proton gradient. In Rickettsia typhi (strain ATCC VR-144 / Wilmington), this protein is NADH-quinone oxidoreductase subunit E (nuoE).